The sequence spans 166 residues: Protein-export protein SecB (166 aa).

It belongs to the SecB family. Homotetramer, a dimer of dimers. One homotetramer interacts with 1 SecA dimer.

It is found in the cytoplasm. In terms of biological role, one of the proteins required for the normal export of preproteins out of the cell cytoplasm. It is a molecular chaperone that binds to a subset of precursor proteins, maintaining them in a translocation-competent state. It also specifically binds to its receptor SecA. In Acidiphilium cryptum (strain JF-5), this protein is Protein-export protein SecB.